Here is a 273-residue protein sequence, read N- to C-terminus: Tryptophan synthase alpha chain (273 aa).

Catalysis depends on proton acceptor residues Glu49 and Asp60.

Belongs to the TrpA family. As to quaternary structure, tetramer of two alpha and two beta chains.

The enzyme catalyses (1S,2R)-1-C-(indol-3-yl)glycerol 3-phosphate + L-serine = D-glyceraldehyde 3-phosphate + L-tryptophan + H2O. It functions in the pathway amino-acid biosynthesis; L-tryptophan biosynthesis; L-tryptophan from chorismate: step 5/5. Its function is as follows. The alpha subunit is responsible for the aldol cleavage of indoleglycerol phosphate to indole and glyceraldehyde 3-phosphate. The sequence is that of Tryptophan synthase alpha chain from Halorhodospira halophila (strain DSM 244 / SL1) (Ectothiorhodospira halophila (strain DSM 244 / SL1)).